The following is a 249-amino-acid chain: MKICLLDETGAGDGALSVLAARWGLEHDENNLMALVLTPQHLELRKRDEPKLGGIFVDFLGGAMAHRRKFGGGRGEAVAKAVGIKGDYLPDVVDATAGLGRDAFVLASVGCRVRMLERNPVVAALLDDGLARGYADADIGPWLRQRLQLIHASSLTALTDITPRPQVVYLDPMFPHRQKSALVKKEMRVFQSLVGPDLDADGLLEPARQLATKRVVVKRPDYAPPLADIATPNAIVTKGHRFDIYAGTA.

S-adenosyl-L-methionine contacts are provided by residues 101 to 102 (RD), 117 to 118 (ER), 153 to 154 (SS), and D171.

Belongs to the methyltransferase superfamily. RsmJ family.

Its subcellular location is the cytoplasm. The catalysed reaction is guanosine(1516) in 16S rRNA + S-adenosyl-L-methionine = N(2)-methylguanosine(1516) in 16S rRNA + S-adenosyl-L-homocysteine + H(+). Functionally, specifically methylates the guanosine in position 1516 of 16S rRNA. The protein is Ribosomal RNA small subunit methyltransferase J of Salmonella arizonae (strain ATCC BAA-731 / CDC346-86 / RSK2980).